A 247-amino-acid polypeptide reads, in one-letter code: MPRLLHPALPLLLGATLTFRALRRALCRLPLPVHVRADPLRTWRWHNLLVSFAHSIVSGIWALLCVWQTPDMLVEIETAWSLSGYLLVCFSAGYFIHDTVDIVASGQTRASWEYLVHHVMAMGAFFSGIFWSSFVGGGVLTLLVEVSNIFLTIRMMMKISNAQDHLLYRVNKYVNLVMYFLFRLAPQAYLTHFFLRYVNQRTLGTFLLGILLMLDVMIIIYFSRLLRSDFCPEHVPKKQHKDKFLTE.

Residues 1–35 (MPRLLHPALPLLLGATLTFRALRRALCRLPLPVHV) form the signal peptide. Residues 36–46 (RADPLRTWRWH) are Extracellular-facing. The region spanning 40-234 (LRTWRWHNLL…LLRSDFCPEH (195 aa)) is the TLC domain. The chain crosses the membrane as a helical span at residues 47–67 (NLLVSFAHSIVSGIWALLCVW). The Cytoplasmic portion of the chain corresponds to 68–83 (QTPDMLVEIETAWSLS). Residues 84-104 (GYLLVCFSAGYFIHDTVDIVA) form a helical membrane-spanning segment. Residues 105-123 (SGQTRASWEYLVHHVMAMG) are Extracellular-facing. Residues 124–144 (AFFSGIFWSSFVGGGVLTLLV) constitute an intramembrane region (helical). The Extracellular segment spans residues 145 to 173 (EVSNIFLTIRMMMKISNAQDHLLYRVNKY). A helical membrane pass occupies residues 174-194 (VNLVMYFLFRLAPQAYLTHFF). At 195–201 (LRYVNQR) the chain is on the cytoplasmic side. The chain crosses the membrane as a helical span at residues 202–222 (TLGTFLLGILLMLDVMIIIYF). At 223 to 247 (SRLLRSDFCPEHVPKKQHKDKFLTE) the chain is on the extracellular side.

The protein localises to the cell membrane. Functionally, regulates the composition and fluidity of the plasma membrane. Inhibits the incorporation of membrane-fluidizing phospholipids containing omega-3 long-chain polyunsaturated fatty acids (LCPUFA) and thereby promotes membrane rigidity. Does not appear to have any effect on LCPUFA synthesis. This chain is TLC domain-containing protein 1 (TLCD1), found in Homo sapiens (Human).